Here is a 94-residue protein sequence, read N- to C-terminus: Large ribosomal subunit protein eL42 (94 aa).

Cys-11, Cys-14, Cys-71, and Cys-74 together coordinate Zn(2+). A C4-type zinc finger spans residues 11–74 (CPFCKRHTIH…LDLRFRCTVC (64 aa)).

It belongs to the eukaryotic ribosomal protein eL42 family. In terms of assembly, part of the 50S ribosomal subunit. Zn(2+) serves as cofactor.

Functionally, binds to the 23S rRNA. The polypeptide is Large ribosomal subunit protein eL42 (Pyrococcus abyssi (strain GE5 / Orsay)).